The primary structure comprises 722 residues: Bifunctional UDP-N-acetylglucosamine 2-epimerase/N-acetylmannosamine kinase (722 aa).

UDP is bound by residues arginine 19, serine 23, arginine 113, histidine 220, and asparagine 253. Residues lysine 259, glutamate 271, lysine 280, and histidine 281 each contribute to the CMP-N-acetyl-beta-neuraminate site. 5 residues coordinate UDP: valine 282, serine 301, serine 302, glutamate 307, and arginine 321. An N-acetylmannosamine kinase region spans residues 406–722 (TLSALAVDLG…VLDYTTRRIH (317 aa)). Aspartate 413 is a binding site for Mg(2+). Glycine 416 lines the an N-acyl-D-mannosamine 6-phosphate pocket. The ADP site is built by threonine 417, asparagine 418, and arginine 420. An N-acyl-D-mannosamine 6-phosphate is bound by residues glycine 476, arginine 477, threonine 489, asparagine 516, aspartate 517, and glycine 545. An N-acyl-D-mannosamine contacts are provided by glycine 476, arginine 477, threonine 489, asparagine 516, and aspartate 517. Aspartate 517 is a catalytic residue. 2 residues coordinate an N-acyl-D-mannosamine: glutamate 566 and histidine 569. Histidine 569 is an an N-acyl-D-mannosamine 6-phosphate binding site. 4 residues coordinate Zn(2+): histidine 569, cysteine 579, cysteine 581, and cysteine 586. Glutamate 588 contacts an N-acyl-D-mannosamine 6-phosphate. Position 588 (glutamate 588) interacts with an N-acyl-D-mannosamine.

In the N-terminal section; belongs to the UDP-N-acetylglucosamine 2-epimerase family. This sequence in the C-terminal section; belongs to the ROK (NagC/XylR) family. In terms of assembly, homodimer. Homotetramer. Homohexamer. The hexameric form exhibits both enzyme activities, whereas the dimeric form only catalyzes the phosphorylation of N-acyl-D-mannosamine. Phosphorylated. Phosphorylation by PKC activates the UDP-N-acetylglucosamine 2-epimerase activity. In terms of tissue distribution, widely expressed. Highest expression in liver. Also found at high levels in lung, brain and kidney.

The protein resides in the cytoplasm. The protein localises to the cytosol. The catalysed reaction is UDP-N-acetyl-alpha-D-glucosamine + H2O = aldehydo-N-acetyl-D-mannosamine + UDP + H(+). It carries out the reaction an N-acyl-D-mannosamine + ATP = an N-acyl-D-mannosamine 6-phosphate + ADP + H(+). The protein operates within amino-sugar metabolism; N-acetylneuraminate biosynthesis. The UDP-N-acetylglucosamine 2-epimerase activity, in contrast to the N-acetylmannosamine kinase activity, exhibits allosteric regulation by cytidine monophosphate-N-acetylneuraminic acid (CMP-Neu5Ac), the end product of neuraminic acid biosynthesis. Moreover, the activity is contingent upon the oligomeric state of the enzyme. The monomeric form is inactive, while the dimeric form selectively catalyzes the phosphorylation of N-acetylmannosamine. The hexameric form, on the other hand, demonstrates full proficiency in both enzyme activities. Furthermore, the UDP-N-acetylglucosamine 2-epimerase activity is increased by PKC-mediated phosphorylation. Bifunctional enzyme that possesses both UDP-N-acetylglucosamine 2-epimerase and N-acetylmannosamine kinase activities, and serves as the initiator of the biosynthetic pathway leading to the production of N-acetylneuraminic acid (NeuAc), a critical precursor in the synthesis of sialic acids. By catalyzing this pivotal and rate-limiting step in sialic acid biosynthesis, this enzyme assumes a pivotal role in governing the regulation of cell surface sialylation, playing a role in embryonic angiogenesis. Sialic acids represent a category of negatively charged sugars that reside on the surface of cells as terminal components of glycoconjugates and mediate important functions in various cellular processes, including cell adhesion, signal transduction, and cellular recognition. In Mus musculus (Mouse), this protein is Bifunctional UDP-N-acetylglucosamine 2-epimerase/N-acetylmannosamine kinase.